The chain runs to 444 residues: MTYIPTTAAEQQQMLAACGAHRMEELFSDVPASVRLGRELNLPRPMAEAEVWRHLEELAGKNKKLVSFLGAGAYEHYIPSVVGHLLARSEFYTAYTPYQPEISQGTLQAIFEFQSLICELTGLDVATASHYDGATAMAEAALVACNATRRQKILVSRSVNPQYRTVLSTYAKGQGVELAEVPLQDGRTDLEALEKLAGKDVAGVILQNPNFFGQIEAMAEATDLAHKARALGIAVVDPVSLGLLAAPGEYGADLAVGEGQSLGNPLNFGGPYLGFIAAREKLVRRLPGRIVGQTKDVDGKRAYVLTLQAREQHIRREKATSNICSNEALCALAATIYLAAMGREGLKEVASQCLLKAHYAQKKLAALPGVTPVFNGPFFHEFVLQTKLSPATVARRLAENGFAAGFDLGRFYPELKNALLFTVTEVRTREEIDALVAAMRGILA.

This sequence belongs to the GcvP family. N-terminal subunit subfamily. As to quaternary structure, the glycine cleavage system is composed of four proteins: P, T, L and H. In this organism, the P 'protein' is a heterodimer of two subunits.

It carries out the reaction N(6)-[(R)-lipoyl]-L-lysyl-[glycine-cleavage complex H protein] + glycine + H(+) = N(6)-[(R)-S(8)-aminomethyldihydrolipoyl]-L-lysyl-[glycine-cleavage complex H protein] + CO2. Its function is as follows. The glycine cleavage system catalyzes the degradation of glycine. The P protein binds the alpha-amino group of glycine through its pyridoxal phosphate cofactor; CO(2) is released and the remaining methylamine moiety is then transferred to the lipoamide cofactor of the H protein. The polypeptide is Probable glycine dehydrogenase (decarboxylating) subunit 1 (Moorella thermoacetica (strain ATCC 39073 / JCM 9320)).